We begin with the raw amino-acid sequence, 93 residues long: CRISPR-associated endoribonuclease Cas2 3 (93 aa).

D10 serves as a coordination point for Mg(2+).

The protein belongs to the CRISPR-associated endoribonuclease Cas2 protein family. Homodimer, forms a heterotetramer with a Cas1 homodimer. The cofactor is Mg(2+).

Functionally, CRISPR (clustered regularly interspaced short palindromic repeat), is an adaptive immune system that provides protection against mobile genetic elements (viruses, transposable elements and conjugative plasmids). CRISPR clusters contain sequences complementary to antecedent mobile elements and target invading nucleic acids. CRISPR clusters are transcribed and processed into CRISPR RNA (crRNA). Functions as a ssRNA-specific endoribonuclease. Involved in the integration of spacer DNA into the CRISPR cassette. The chain is CRISPR-associated endoribonuclease Cas2 3 from Chloroflexus aurantiacus (strain ATCC 29366 / DSM 635 / J-10-fl).